The primary structure comprises 362 residues: 3-dehydroquinate synthase (362 aa).

NAD(+) contacts are provided by residues 71–76 (DGEQYK), 105–109 (GVVGD), 129–130 (TT), Lys142, Lys151, and 169–172 (CLKT). Zn(2+) contacts are provided by Glu184, His248, and His265.

Belongs to the sugar phosphate cyclases superfamily. Dehydroquinate synthase family. Co(2+) serves as cofactor. Requires Zn(2+) as cofactor. The cofactor is NAD(+).

The protein localises to the cytoplasm. The catalysed reaction is 7-phospho-2-dehydro-3-deoxy-D-arabino-heptonate = 3-dehydroquinate + phosphate. It participates in metabolic intermediate biosynthesis; chorismate biosynthesis; chorismate from D-erythrose 4-phosphate and phosphoenolpyruvate: step 2/7. In terms of biological role, catalyzes the conversion of 3-deoxy-D-arabino-heptulosonate 7-phosphate (DAHP) to dehydroquinate (DHQ). In Yersinia pseudotuberculosis serotype O:1b (strain IP 31758), this protein is 3-dehydroquinate synthase.